The chain runs to 243 residues: Protein VERNALIZATION 1 (243 aa).

In terms of domain architecture, MADS-box spans 1–61 (MGRGKVQLKR…GKLYEFATDS (61 aa)). Positions 88 to 178 (QGNWCHEYRK…QKELVEKQKA (91 aa)) constitute a K-box domain. A coiled-coil region spans residues 122 to 178 (LKELQQLEQQLESSLKHIRSRKNQLMHESISELQRKERSLQEENKALQKELVEKQKA). Residues 173 to 243 (VEKQKAHTQQ…PPWMVSHISG (71 aa)) are disordered. Polar residues predominate over residues 179–192 (HTQQAQWEQTHPQT).

It is found in the nucleus. Functionally, component of a grass-specific mechanism of vernalization, a process by which prolonged cold exposure provides competence to flower in daylengths longer than 12 hours. Involved in the exit of vernalization and confers flowering competency at the expense of freezing tolerance, probably by promoting the expression of VRN3; this process is essential in cv. Bd29-1 for flowering but seems do not occur in cv. Bd21. The protein is Protein VERNALIZATION 1 of Brachypodium distachyon (Purple false brome).